We begin with the raw amino-acid sequence, 421 residues long: Putative bifunctional polynucleotide phosphatase/kinase (421 aa).

Residues 25–231 (DSYLKGIINN…SENLKTNYKL (207 aa)) are phosphatase. A kinase region spans residues 235–415 (NPTEIIDEIE…DDPKWKRSFM (181 aa)). 265-272 (GQPGSGKS) is a binding site for ATP.

The protein in the N-terminal section; belongs to the DNA 3' phosphatase family.

It catalyses the reaction a 3'end (2'-deoxyribonucleotide 3'-phosphate)-DNA + H2O = a 3'-end 2'-deoxyribonucleotide-DNA + phosphate. It carries out the reaction a 5'-end dephospho-2'-deoxyribonucleoside-DNA + ATP = a 5'-end 5'-phospho-2'-deoxyribonucleoside-DNA + ADP + H(+). This is Putative bifunctional polynucleotide phosphatase/kinase from Acanthamoeba polyphaga mimivirus (APMV).